A 499-amino-acid polypeptide reads, in one-letter code: Proline--tRNA ligase (499 aa).

This sequence belongs to the class-II aminoacyl-tRNA synthetase family. ProS type 3 subfamily. As to quaternary structure, homodimer.

It is found in the cytoplasm. It carries out the reaction tRNA(Pro) + L-proline + ATP = L-prolyl-tRNA(Pro) + AMP + diphosphate. Its function is as follows. Catalyzes the attachment of proline to tRNA(Pro) in a two-step reaction: proline is first activated by ATP to form Pro-AMP and then transferred to the acceptor end of tRNA(Pro). In Bdellovibrio bacteriovorus (strain ATCC 15356 / DSM 50701 / NCIMB 9529 / HD100), this protein is Proline--tRNA ligase.